Consider the following 306-residue polypeptide: Non-specific ribonucleoside hydrolase RihC (306 aa).

H235 is a catalytic residue.

The protein belongs to the IUNH family. RihC subfamily.

Hydrolyzes both purine and pyrimidine ribonucleosides with a broad-substrate specificity. This is Non-specific ribonucleoside hydrolase RihC from Salmonella paratyphi C (strain RKS4594).